A 1142-amino-acid chain; its full sequence is Collagen alpha-1(XIX) chain (1142 aa).

An N-terminal signal peptide occupies residues 1–23 (MRLTGPWKLWLWMSIFLLPASTS). In terms of domain architecture, Laminin G-like spans 50 to 234 (NKLEVSGFDL…LHQLKIYCSA (185 aa)). Disordered regions lie at residues 288–680 (IPNK…GDPI), 704–1009 (PGLK…PGIP), and 1053–1142 (YGRP…TGGN). 3 consecutive Collagen-like domains span residues 292 to 349 (GEAG…GEKG), 350 to 391 (DPAL…ALPG), and 392 to 433 (SLGI…GIQG). A triple-helical region 1 (COL1) region spans residues 292–351 (GEAGLPGAPGSPGQKGHKGEPGENGLHGAPGFPGQKGEQGFEGSKGETGEKGEQGEKGDP). A compositionally biased stretch (basic and acidic residues) spans 335–350 (SKGETGEKGEQGEKGD). The segment at 370–429 (GPPGPKGEKGDTGPPGPPALPGSLGIQGPQGPPGKEGQRGRRGKTGPPGKPGPPGPPGPP) is triple-helical region 2 (COL2). Residues 390-404 (PGSLGIQGPQGPPGK) are compositionally biased toward low complexity. Residues 417–429 (PGKPGPPGPPGPP) are compositionally biased toward pro residues. 2 stretches are compositionally biased toward basic and acidic residues: residues 444 to 463 (KDNK…DKGE) and 478 to 496 (QKGE…DRGE). The interval 448–688 (GNDEHEAGGL…PIALPLLGDI (241 aa)) is triple-helical region 3 (COL3). Collagen-like domains follow at residues 474 to 516 (GPKG…GPPG), 568 to 624 (GPPG…GPQG), 626 to 678 (GIPG…PPGD), 728 to 778 (KGDI…APGP), 779 to 814 (TGPP…PPGP), 845 to 903 (GPPG…VPGE), 904 to 947 (PGER…GDRG), and 948 to 1004 (PKGE…GSPG). Positions 640-651 (PGIQGPRGLPGL) are enriched in low complexity. The tract at residues 700-818 (QASVPGLKSN…PGPPGPPGIP (119 aa)) is triple-helical region 4 (COL4). 2 stretches are compositionally biased toward basic and acidic residues: residues 720–731 (GKYDSMARKGDI) and 743–752 (EGPKGSKGER). Composition is skewed to pro residues over residues 806-817 (PGKPGPPGPPGI) and 840-852 (YPGP…PKGD). The triple-helical region 5 (COL5) stretch occupies residues 833 to 1012 (GGVNVPSYPG…PGIPGIPADA (180 aa)). Residues 943–954 (PGDRGPKGERGD) are compositionally biased toward basic and acidic residues. Positions 952–954 (RGD) match the Cell attachment site motif. The tract at residues 1054 to 1111 (GRPGPPGKDGLPGPPGDPGPQGYRGQKGERGEPGIGLPGSPGLPGTSALGLPGSPGAP) is triple-helical region 6 (COL6). Low complexity predominate over residues 1093-1107 (SPGLPGTSALGLPGS). Residues 1108-1119 (PGAPGPQGPPGP) are compositionally biased toward pro residues.

Belongs to the fibril-associated collagens with interrupted helices (FACIT) family. Oligomer; disulfide-linked. Prolines at the third position of the tripeptide repeating unit (G-X-Y) are hydroxylated in some or all of the chains. As to expression, localized to vascular, neuronal, mesenchymal, and some epithelial basement membrane zones in umbilical cord.

Its subcellular location is the secreted. It is found in the extracellular space. The protein localises to the extracellular matrix. Functionally, may act as a cross-bridge between fibrils and other extracellular matrix molecules. Involved in skeletal myogenesis in the developing esophagus. May play a role in organization of the pericellular matrix or the sphinteric smooth muscle. The chain is Collagen alpha-1(XIX) chain (COL19A1) from Homo sapiens (Human).